Reading from the N-terminus, the 489-residue chain is MTETGLILMWFPLIILGLFVLKWVLKRVNVWIYVSKLGEKKHYLPPGDLGWPVIGNMWSFLRAFKTSDPESFIQSYITRYGRTGIYKAHMFGYPCVLVTTPETCRRVLTDDDAFHIGWPKSTMKLIGRKSFVGISFEEHKRLRRLTSAPVNGPEALSVYIQFIEETVNTDLEKWSKMGEIEFLSHLRKLTFKVIMYIFLSSESEHVMDSLEREYTNLNYGVRAMGINLPGFAYHRALKARKKLVAAFQSIVTNRRNQRKQNISSNRKDMLDNLIDVKDENGRVLDDEEIIDLLLMYLNAGHESSGHLTMWATILMQEHPMILQKAKEEQERIVKKRAPGQKLTLKETREMVYLSQVIDETLRVITFSLTAFREAKSDVQMDGYIIPKGWKVLTWFRNVHLDPEIYPDPKKFDPSRWEGYTPKAGTFLPFGLGSHLCPGNDLAKLEISIFLHHFLLKYRVERSNPGCPVMFLPHNRPKDNCLARITRTMP.

Residues Gly5–Leu25 form a helical membrane-spanning segment. Cys436 is a heme binding site.

Belongs to the cytochrome P450 family. The cofactor is heme. Widely expressed. Highly expressed in influorescence stem, influorescence, and silique tissue. Weakly expressed in cauline and rosette leaves. Expressed at a weaker level in stem and influorescence than AtKAO1/CYP88A3.

The protein localises to the endoplasmic reticulum membrane. The catalysed reaction is ent-kaur-16-en-19-oate + 3 reduced [NADPH--hemoprotein reductase] + 3 O2 = gibberellin A12 + 3 oxidized [NADPH--hemoprotein reductase] + 4 H2O + 4 H(+). The enzyme catalyses ent-kaur-16-en-19-oate + reduced [NADPH--hemoprotein reductase] + O2 = ent-7alpha-hydroxykaur-16-en-19-oate + oxidized [NADPH--hemoprotein reductase] + H2O + H(+). It catalyses the reaction ent-7alpha-hydroxykaur-16-en-19-oate + reduced [NADPH--hemoprotein reductase] + O2 = gibberellin A12 aldehyde + oxidized [NADPH--hemoprotein reductase] + 2 H2O + H(+). It carries out the reaction gibberellin A12 aldehyde + reduced [NADPH--hemoprotein reductase] + O2 = gibberellin A12 + oxidized [NADPH--hemoprotein reductase] + H2O + 2 H(+). It functions in the pathway plant hormone biosynthesis; gibberellin biosynthesis. Its function is as follows. Catalyzes three successive oxidations of ent-kaurenoic acid giving gibberellin 12 (GA12), a key step in gibberellins (GAs) biosynthesis. GAs, which are involved many processes, including stem elongation, play a central role in plant development. The polypeptide is Ent-kaurenoic acid oxidase 2 (Arabidopsis thaliana (Mouse-ear cress)).